Consider the following 349-residue polypeptide: Ion-translocating oxidoreductase complex subunit D (349 aa).

The next 4 helical transmembrane spans lie at 20 to 40, 42 to 62, 83 to 105, and 120 to 140; these read IMFL…YFFG, GVLI…IIIL, VLLG…CFFA, and IFNP…VHMT. T184 carries the FMN phosphoryl threonine modification. A run of 5 helical transmembrane segments spans residues 212-232, 236-256, 263-283, 291-311, and 319-339; these read IVSI…CFLL, VICW…SSIT, FFCS…AFFI, SCTK…VWII, and DGIA…DAYL.

It belongs to the NqrB/RnfD family. The complex is composed of six subunits: RnfA, RnfB, RnfC, RnfD, RnfE and RnfG. FMN serves as cofactor.

It localises to the cell inner membrane. Functionally, part of a membrane-bound complex that couples electron transfer with translocation of ions across the membrane. The sequence is that of Ion-translocating oxidoreductase complex subunit D from Buchnera aphidicola subsp. Schizaphis graminum (strain Sg).